The sequence spans 338 residues: Glycerol-3-phosphate dehydrogenase [NAD(P)+] (338 aa).

Ser-13, Trp-14, and Lys-108 together coordinate NADPH. Sn-glycerol 3-phosphate-binding residues include Lys-108, Gly-139, and Ser-141. Ala-143 contributes to the NADPH binding site. The sn-glycerol 3-phosphate site is built by Lys-194, Asp-247, Ser-257, Arg-258, and Asn-259. Catalysis depends on Lys-194, which acts as the Proton acceptor. Arg-258 lines the NADPH pocket. Positions 282 and 284 each coordinate NADPH.

It belongs to the NAD-dependent glycerol-3-phosphate dehydrogenase family.

It localises to the cytoplasm. The catalysed reaction is sn-glycerol 3-phosphate + NAD(+) = dihydroxyacetone phosphate + NADH + H(+). The enzyme catalyses sn-glycerol 3-phosphate + NADP(+) = dihydroxyacetone phosphate + NADPH + H(+). It participates in membrane lipid metabolism; glycerophospholipid metabolism. In terms of biological role, catalyzes the reduction of the glycolytic intermediate dihydroxyacetone phosphate (DHAP) to sn-glycerol 3-phosphate (G3P), the key precursor for phospholipid synthesis. The polypeptide is Glycerol-3-phosphate dehydrogenase [NAD(P)+] (Streptococcus pneumoniae (strain Taiwan19F-14)).